We begin with the raw amino-acid sequence, 257 residues long: Ribonuclease HII (257 aa).

An RNase H type-2 domain is found at T72–K257. 3 residues coordinate a divalent metal cation: D78, E79, and D170.

This sequence belongs to the RNase HII family. The cofactor is Mn(2+). Mg(2+) is required as a cofactor.

It localises to the cytoplasm. It catalyses the reaction Endonucleolytic cleavage to 5'-phosphomonoester.. Its function is as follows. Endonuclease that specifically degrades the RNA of RNA-DNA hybrids. The polypeptide is Ribonuclease HII (Bacillus cereus (strain AH820)).